The primary structure comprises 176 residues: Magnesium-dependent phosphatase 1 (176 aa).

Residue aspartate 11 is the Nucleophile of the active site. Aspartate 11 lines the Mg(2+) pocket. Positions 12 and 13 each coordinate phosphate. Residue aspartate 13 participates in Mg(2+) binding. Aspartate 13 acts as the Proton donor in catalysis. Tryptophan 20 serves as a coordination point for substrate. The phosphate site is built by serine 69, arginine 70, and lysine 100. Arginine 70 contributes to the substrate binding site. A Mg(2+)-binding site is contributed by aspartate 123.

Belongs to the HAD-like hydrolase superfamily. Mg(2+) serves as cofactor.

The catalysed reaction is O-phospho-L-tyrosyl-[protein] + H2O = L-tyrosyl-[protein] + phosphate. Its activity is regulated as follows. Inhibited by vanadate and zinc, and slightly by calcium. Its function is as follows. Magnesium-dependent phosphatase which may act as a tyrosine phosphatase. In Homo sapiens (Human), this protein is Magnesium-dependent phosphatase 1 (MDP1).